Here is a 1759-residue protein sequence, read N- to C-terminus: Protein TIC 214 (1759 aa).

The next 5 helical transmembrane spans lie at 23–45, 64–84, 129–149, 172–192, and 221–241; these read VVVGLYYGFMTTFSIGPSYLFLL, FITGQLIIFMSIYYAPLHLAL, IFFQNLLFQFFNPLFLPSSIF, IGWIIGHTFFMKWIEFLLICI, and IFVVFLFVTCLYYLGRIPPPF.

This sequence belongs to the TIC214 family. Part of the Tic complex.

The protein localises to the plastid. It is found in the chloroplast inner membrane. Involved in protein precursor import into chloroplasts. May be part of an intermediate translocation complex acting as a protein-conducting channel at the inner envelope. The chain is Protein TIC 214 from Phaseolus vulgaris (Kidney bean).